A 531-amino-acid chain; its full sequence is Transporter mfs1 (531 aa).

The next 10 membrane-spanning stretches (helical) occupy residues L83–F103, V119–F139, L158–L178, F182–I202, F214–V234, W241–M261, I325–F345, L358–L378, I398–W418, and V424–F444. Residue N486 is glycosylated (N-linked (GlcNAc...) asparagine). The chain crosses the membrane as a helical span at residues G496–I516.

This sequence belongs to the major facilitator superfamily. CAR1 family.

The protein resides in the endoplasmic reticulum. It localises to the membrane. This is Transporter mfs1 (mfs1) from Schizosaccharomyces pombe (strain 972 / ATCC 24843) (Fission yeast).